A 304-amino-acid polypeptide reads, in one-letter code: NAD kinase (304 aa).

Asp-77 acts as the Proton acceptor in catalysis. NAD(+)-binding positions include Asp-77 to Gly-78, Arg-82, Asn-151 to Glu-152, Arg-162, Asp-181, and Thr-192 to Ser-197.

This sequence belongs to the NAD kinase family. The cofactor is a divalent metal cation.

The protein resides in the cytoplasm. The catalysed reaction is NAD(+) + ATP = ADP + NADP(+) + H(+). Involved in the regulation of the intracellular balance of NAD and NADP, and is a key enzyme in the biosynthesis of NADP. Catalyzes specifically the phosphorylation on 2'-hydroxyl of the adenosine moiety of NAD to yield NADP. The sequence is that of NAD kinase from Leifsonia xyli subsp. xyli (strain CTCB07).